Here is a 459-residue protein sequence, read N- to C-terminus: Putrescine aminotransferase (459 aa).

Pyridoxal 5'-phosphate is bound by residues 150 to 151 and Gln274; that span reads GT. Lys300 bears the N6-(pyridoxal phosphate)lysine mark. Thr332 lines the pyridoxal 5'-phosphate pocket.

It belongs to the class-III pyridoxal-phosphate-dependent aminotransferase family. Putrescine aminotransferase subfamily. Pyridoxal 5'-phosphate serves as cofactor.

The enzyme catalyses an alkane-alpha,omega-diamine + 2-oxoglutarate = an omega-aminoaldehyde + L-glutamate. It catalyses the reaction putrescine + 2-oxoglutarate = 1-pyrroline + L-glutamate + H2O. It carries out the reaction cadaverine + 2-oxoglutarate = 5-aminopentanal + L-glutamate. It participates in amine and polyamine degradation; putrescine degradation; 4-aminobutanal from putrescine (transaminase route): step 1/1. Functionally, catalyzes the aminotransferase reaction from putrescine to 2-oxoglutarate, leading to glutamate and 4-aminobutanal, which spontaneously cyclizes to form 1-pyrroline. This is the first step in one of two pathways for putrescine degradation, where putrescine is converted into 4-aminobutanoate (gamma-aminobutyrate or GABA) via 4-aminobutanal. Also functions as a cadaverine transaminase in a a L-lysine degradation pathway to succinate that proceeds via cadaverine, glutarate and L-2-hydroxyglutarate. This chain is Putrescine aminotransferase, found in Klebsiella pneumoniae subsp. pneumoniae (strain ATCC 700721 / MGH 78578).